The sequence spans 354 residues: Trans-L-3-hydroxyproline dehydratase (354 aa).

Cysteine 104 functions as the Proton acceptor in the catalytic mechanism. Residues 105 to 106, aspartate 269, and 274 to 275 contribute to the substrate site; these read GH and GS.

The protein belongs to the proline racemase family. Homodimer.

It catalyses the reaction trans-3-hydroxy-L-proline = 1-pyrroline-2-carboxylate + H2O. In terms of biological role, catalyzes the dehydration of trans-3-hydroxy-L-proline to delta-1-pyrroline-2-carboxylate (Pyr2C). This Mus musculus (Mouse) protein is Trans-L-3-hydroxyproline dehydratase (L3hypdh).